The following is a 170-amino-acid chain: Protein SprT (170 aa).

A SprT-like domain is found at 19-163 (REKLQQANLR…RCLHCGTSLR (145 aa)). Histidine 78 contributes to the Zn(2+) binding site. Residue glutamate 79 is part of the active site. Histidine 82 provides a ligand contact to Zn(2+).

The protein belongs to the SprT family. Zn(2+) is required as a cofactor.

It localises to the cytoplasm. This Erwinia tasmaniensis (strain DSM 17950 / CFBP 7177 / CIP 109463 / NCPPB 4357 / Et1/99) protein is Protein SprT.